The chain runs to 1758 residues: RanBP2-like and GRIP domain-containing protein 4 (1758 aa).

Ser21 carries the post-translational modification Phosphoserine. TPR repeat units follow at residues 60–93 (PRAH…NPTQ) and 584–617 (QKMG…LKII). The tract at residues 761–805 (DPLYKNGSLRNADSEIKHSTPSPTKYSLSPSKSYKYSPKTPPRWA) is disordered. Residues 779-798 (STPSPTKYSLSPSKSYKYSP) show a composition bias toward low complexity. The RanBD1 1 domain occupies 1037–1173 (HFEPVVQMPE…FEECQQLLLD (137 aa)). 2 disordered regions span residues 1213 to 1249 (QTKV…TLEW) and 1295 to 1332 (SFKS…ERDG). The span at 1236–1245 (IKPNPENTGP) shows a compositional bias: polar residues. A compositionally biased stretch (low complexity) spans 1295-1309 (SFKSALSPSKSPAKL). Positions 1318–1330 (TDEESDVTQEEER) are enriched in acidic residues. In terms of domain architecture, RanBD1 2 spans 1334-1470 (YFEPVVPLPD…FDEAKTAQEK (137 aa)). The span at 1583 to 1594 (SETSSVAQSGSE) shows a compositional bias: polar residues. Positions 1583–1621 (SETSSVAQSGSESKVEPKKCELSKNSDIEQSSDSKVKNL) are disordered. Residues 1595–1618 (SKVEPKKCELSKNSDIEQSSDSKV) show a composition bias toward basic and acidic residues. The GRIP domain occupies 1703–1753 (QEESAANVEHLKNVLLQFIFLKPGSERERLLPVINTMLQLSPEEKGKLAAV).

This is RanBP2-like and GRIP domain-containing protein 4 (RGPD4) from Homo sapiens (Human).